The chain runs to 667 residues: Probable oxidoreductase YyaE (667 aa).

Residues 2 to 59 (SKVHQSACPLNCWDSCGFLVTVDDGKVTKVDGDPNHPITEGKICGRGRMLETKTNSPD) enclose the 4Fe-4S Mo/W bis-MGD-type domain. Residues C9, C13, C17, and C45 each contribute to the [4Fe-4S] cluster site.

It belongs to the prokaryotic molybdopterin-containing oxidoreductase family. Requires Mo-bis(molybdopterin guanine dinucleotide) as cofactor.

The chain is Probable oxidoreductase YyaE (yyaE) from Bacillus subtilis (strain 168).